The following is a 944-amino-acid chain: Neutral alpha-glucosidase AB (944 aa).

Positions 1 to 32 (MAAIAAVAARRRRSWLSLVLAYLGVCLGITLA) are cleaved as a signal peptide. C41 and C47 are oxidised to a cystine. S52 carries the post-translational modification Phosphoserine. N97 carries N-linked (GlcNAc...) asparagine glycosylation. The segment at 180–238 (HQRAPRVPQESKDPAEGNGAQPEATPGDGDKPEETQEKAEKDEPGAWEETFKTHSDSKP) is disordered. Residues 207–236 (DGDKPEETQEKAEKDEPGAWEETFKTHSDS) are compositionally biased toward basic and acidic residues. Substrate is bound by residues D283 and D429. The active-site Nucleophile is the D542. R602 is a substrate binding site. D618 serves as the catalytic Proton donor. C633 and C644 are oxidised to a cystine. Position 676 (H676) interacts with substrate.

Belongs to the glycosyl hydrolase 31 family. As to quaternary structure, heterodimer of a catalytic alpha subunit (GANAB) and a beta subunit (PRKCSH). Binds glycosylated PTPRC.

It is found in the endoplasmic reticulum. The protein localises to the golgi apparatus. Its subcellular location is the melanosome. It catalyses the reaction N(4)-(alpha-D-Glc-(1-&gt;3)-alpha-D-Man-(1-&gt;2)-alpha-D-Man-(1-&gt;2)-alpha-D-Man-(1-&gt;3)-[alpha-D-Man-(1-&gt;2)-alpha-D-Man-(1-&gt;3)-[alpha-D-Man-(1-&gt;2)-alpha-D-Man-(1-&gt;6)]-alpha-D-Man-(1-&gt;6)]-beta-D-Man-(1-&gt;4)-beta-D-GlcNAc-(1-&gt;4)-beta-D-GlcNAc)-L-asparaginyl-[protein] + H2O = N(4)-(alpha-D-Man-(1-&gt;2)-alpha-D-Man-(1-&gt;2)-alpha-D-Man-(1-&gt;3)-[alpha-D-Man-(1-&gt;2)-alpha-D-Man-(1-&gt;3)-[alpha-D-Man-(1-&gt;2)-alpha-D-Man-(1-&gt;6)]-alpha-D-Man-(1-&gt;6)]-beta-D-Man-(1-&gt;4)-beta-D-GlcNAc-(1-&gt;4)-beta-D-GlcNAc)-L-asparaginyl-[protein] (N-glucan mannose isomer 9A1,2,3B1,2,3) + beta-D-glucose. The catalysed reaction is N(4)-(alpha-D-Glc-(1-&gt;3)-alpha-D-Glc-(1-&gt;3)-alpha-D-Man-(1-&gt;2)-alpha-D-Man-(1-&gt;2)-alpha-D-Man-(1-&gt;3)-[alpha-D-Man-(1-&gt;2)-alpha-D-Man-(1-&gt;3)-[alpha-D-Man-(1-&gt;2)-alpha-D-Man-(1-&gt;6)]-alpha-D-Man-(1-&gt;6)]-beta-D-Man-(1-&gt;4)-beta-D-GlcNAc-(1-&gt;4)-beta-D-GlcNAc)-L-asparaginyl-[protein] + H2O = N(4)-(alpha-D-Glc-(1-&gt;3)-alpha-D-Man-(1-&gt;2)-alpha-D-Man-(1-&gt;2)-alpha-D-Man-(1-&gt;3)-[alpha-D-Man-(1-&gt;2)-alpha-D-Man-(1-&gt;3)-[alpha-D-Man-(1-&gt;2)-alpha-D-Man-(1-&gt;6)]-alpha-D-Man-(1-&gt;6)]-beta-D-Man-(1-&gt;4)-beta-D-GlcNAc-(1-&gt;4)-beta-D-GlcNAc)-L-asparaginyl-[protein] + beta-D-glucose. It functions in the pathway glycan metabolism; N-glycan metabolism. Functionally, catalytic subunit of glucosidase II that cleaves sequentially the 2 innermost alpha-1,3-linked glucose residues from the Glc(2)Man(9)GlcNAc(2) oligosaccharide precursor of immature glycoproteins. Required for PKD1/Polycystin-1 and PKD2/Polycystin-2 maturation and localization to the cell surface and cilia. The polypeptide is Neutral alpha-glucosidase AB (Mus musculus (Mouse)).